Here is a 355-residue protein sequence, read N- to C-terminus: UDP-N-acetylglucosamine--N-acetylmuramyl-(pentapeptide) pyrophosphoryl-undecaprenol N-acetylglucosamine transferase (355 aa).

UDP-N-acetyl-alpha-D-glucosamine-binding positions include 14–16 (TGG), Asn-126, Arg-164, Ser-190, Ile-243, 262–267 (ALTVAE), and Gln-288.

It belongs to the glycosyltransferase 28 family. MurG subfamily.

It localises to the cell inner membrane. The enzyme catalyses di-trans,octa-cis-undecaprenyl diphospho-N-acetyl-alpha-D-muramoyl-L-alanyl-D-glutamyl-meso-2,6-diaminopimeloyl-D-alanyl-D-alanine + UDP-N-acetyl-alpha-D-glucosamine = di-trans,octa-cis-undecaprenyl diphospho-[N-acetyl-alpha-D-glucosaminyl-(1-&gt;4)]-N-acetyl-alpha-D-muramoyl-L-alanyl-D-glutamyl-meso-2,6-diaminopimeloyl-D-alanyl-D-alanine + UDP + H(+). Its pathway is cell wall biogenesis; peptidoglycan biosynthesis. In terms of biological role, cell wall formation. Catalyzes the transfer of a GlcNAc subunit on undecaprenyl-pyrophosphoryl-MurNAc-pentapeptide (lipid intermediate I) to form undecaprenyl-pyrophosphoryl-MurNAc-(pentapeptide)GlcNAc (lipid intermediate II). This is UDP-N-acetylglucosamine--N-acetylmuramyl-(pentapeptide) pyrophosphoryl-undecaprenol N-acetylglucosamine transferase from Psychromonas ingrahamii (strain DSM 17664 / CCUG 51855 / 37).